The chain runs to 396 residues: Tail sheath protein (396 aa).

The protein belongs to the myoviridae tail sheath protein family. In terms of assembly, homomultimer.

The protein localises to the virion. Its subcellular location is the host cytoplasm. Its function is as follows. Polymerizes as an extended helical structure around the baseplate-tail tube complex. During ejection, the sheath shifts to a contracted form, thereby making the inner tail tube protrude through the host cell envelope. The sequence is that of Tail sheath protein (FI) from Enterobacteriaceae (Bacteriophage P2).